A 302-amino-acid chain; its full sequence is Aspartate carbamoyltransferase catalytic subunit (302 aa).

Arginine 54 and threonine 55 together coordinate carbamoyl phosphate. Lysine 82 serves as a coordination point for L-aspartate. Residues arginine 104, histidine 132, and glutamine 135 each contribute to the carbamoyl phosphate site. Arginine 165 and arginine 217 together coordinate L-aspartate. Glycine 257 and proline 258 together coordinate carbamoyl phosphate.

This sequence belongs to the aspartate/ornithine carbamoyltransferase superfamily. ATCase family. Heterododecamer (2C3:3R2) of six catalytic PyrB chains organized as two trimers (C3), and six regulatory PyrI chains organized as three dimers (R2).

It catalyses the reaction carbamoyl phosphate + L-aspartate = N-carbamoyl-L-aspartate + phosphate + H(+). The protein operates within pyrimidine metabolism; UMP biosynthesis via de novo pathway; (S)-dihydroorotate from bicarbonate: step 2/3. In terms of biological role, catalyzes the condensation of carbamoyl phosphate and aspartate to form carbamoyl aspartate and inorganic phosphate, the committed step in the de novo pyrimidine nucleotide biosynthesis pathway. This chain is Aspartate carbamoyltransferase catalytic subunit, found in Thermus thermophilus (strain ATCC BAA-163 / DSM 7039 / HB27).